A 638-amino-acid chain; its full sequence is Phosphomethylpyrimidine synthase (638 aa).

Residues N235, M264, Y293, H329, 349 to 351, 390 to 393, and E429 contribute to the substrate site; these read SRG and DGLR. Position 433 (H433) interacts with Zn(2+). Residue Y456 participates in substrate binding. Zn(2+) is bound at residue H497. [4Fe-4S] cluster is bound by residues C577, C580, and C585.

It belongs to the ThiC family. As to quaternary structure, homodimer. [4Fe-4S] cluster serves as cofactor.

The catalysed reaction is 5-amino-1-(5-phospho-beta-D-ribosyl)imidazole + S-adenosyl-L-methionine = 4-amino-2-methyl-5-(phosphooxymethyl)pyrimidine + CO + 5'-deoxyadenosine + formate + L-methionine + 3 H(+). Its pathway is cofactor biosynthesis; thiamine diphosphate biosynthesis. Catalyzes the synthesis of the hydroxymethylpyrimidine phosphate (HMP-P) moiety of thiamine from aminoimidazole ribotide (AIR) in a radical S-adenosyl-L-methionine (SAM)-dependent reaction. This Polaromonas naphthalenivorans (strain CJ2) protein is Phosphomethylpyrimidine synthase.